The primary structure comprises 405 residues: Secreted aspartic protease 8 (405 aa).

The signal sequence occupies residues 1 to 25 (MVSIITFTKNVLVTLAFALLAQGLA). Asn-50 carries N-linked (GlcNAc...) asparagine glycosylation. The tract at residues 52–78 (TAHGQHHQSQQQQQQQQQQPAQKRGTV) is disordered. A compositionally biased stretch (low complexity) spans 58–70 (HQSQQQQQQQQQQ). Residues 89-392 (YAATITVGSN…DLDGNTISLA (304 aa)) enclose the Peptidase A1 domain. Asp-107 is an active-site residue. Pepstatin A is bound at residue 107–109 (DTG). Cys-122 and Cys-134 are oxidised to a cystine. The active site involves Asp-292. 292-296 (DSGTT) contacts pepstatin A. An intrachain disulfide couples Cys-327 to Cys-358.

This sequence belongs to the peptidase A1 family. In terms of assembly, monomer.

It is found in the secreted. The enzyme catalyses Preferential cleavage at the carboxyl of hydrophobic amino acids, but fails to cleave 15-Leu-|-Tyr-16, 16-Tyr-|-Leu-17 and 24-Phe-|-Phe-25 of insulin B chain. Activates trypsinogen, and degrades keratin.. Functionally, secreted aspartic peptidases (SAPs) are a group of ten acidic hydrolases considered as key virulence factors. These enzymes supply the fungus with nutrient amino acids as well as are able to degrade the selected host's proteins involved in the immune defense. Moreover, acts toward human hemoglobin though limited proteolysis to generate a variety of antimicrobial hemocidins, enabling to compete with the other microorganisms of the same physiological niche using the microbicidal peptides generated from the host protein. Its function is as follows. Plays a key role in defense against host by cleaving histatin-5 (Hst 5), a peptide from human saliva that carries out fungicidal activity. The cleavage rate decreases in an order of SAP2 &gt; SAP9 &gt; SAP3 &gt; SAP7 &gt; SAP4 &gt; SAP1 &gt; SAP8. The hydrolysis of Hst 5 by SAP8 causes production of the DSHAKRHHGY, HHSHRGY and FHEKHHSHRGY peptides. The polypeptide is Secreted aspartic protease 8 (Candida albicans (Yeast)).